The primary structure comprises 343 residues: tRNA N6-adenosine threonylcarbamoyltransferase (343 aa).

Positions 116 and 120 each coordinate Fe cation. Substrate is bound by residues 138–142 (LVSGG), D171, G184, D188, and N277. Residue D306 coordinates Fe cation.

The protein belongs to the KAE1 / TsaD family. Requires Fe(2+) as cofactor.

It localises to the cytoplasm. The enzyme catalyses L-threonylcarbamoyladenylate + adenosine(37) in tRNA = N(6)-L-threonylcarbamoyladenosine(37) in tRNA + AMP + H(+). Functionally, required for the formation of a threonylcarbamoyl group on adenosine at position 37 (t(6)A37) in tRNAs that read codons beginning with adenine. Is involved in the transfer of the threonylcarbamoyl moiety of threonylcarbamoyl-AMP (TC-AMP) to the N6 group of A37, together with TsaE and TsaB. TsaD likely plays a direct catalytic role in this reaction. This Ligilactobacillus salivarius (strain UCC118) (Lactobacillus salivarius) protein is tRNA N6-adenosine threonylcarbamoyltransferase.